A 98-amino-acid polypeptide reads, in one-letter code: Prolactin-releasing peptide (98 aa).

The first 22 residues, 1 to 22, serve as a signal peptide directing secretion; it reads MKAVGAWLLCLLLLGLALQGAA. 2 disordered regions span residues 52–71 and 79–98; these read RFGR…PRRV and GGAE…LVQE. Phe-53 bears the Phenylalanine amide mark. The propeptide occupies 58–98; it reads AAPGDGPRPGPRRVPACFRLEGGAEPSRALPGRLTAQLVQE.

Post-translationally, amidation of C-terminus is required for receptor interaction. In terms of tissue distribution, medulla oblongata and hypothalamus.

It is found in the secreted. Stimulates prolactin (PRL) release and regulates the expression of prolactin through its receptor GPR10. May stimulate lactotrophs directly to secrete PRL. This Bos taurus (Bovine) protein is Prolactin-releasing peptide (PRLH).